A 375-amino-acid polypeptide reads, in one-letter code: Trichodiene synthase (375 aa).

Belongs to the trichodiene synthase family.

It catalyses the reaction (2E,6E)-farnesyl diphosphate = trichodiene + diphosphate. It participates in sesquiterpene biosynthesis; trichothecene biosynthesis. In terms of biological role, TS is a member of the terpene cyclase group of enzymes. It catalyzes the isomerization and cyclization of farnesyl pyro-phosphate to form trichodiene, the first cyclic intermediate in the biosynthetic pathway for trichothecenes. It serves to branch trichothecene biosynthesis from the isoprenoid pathway. The chain is Trichodiene synthase (TRI5) from Gibberella zeae (strain ATCC MYA-4620 / CBS 123657 / FGSC 9075 / NRRL 31084 / PH-1) (Wheat head blight fungus).